Reading from the N-terminus, the 96-residue chain is Cathelin (96 aa).

A Pyrrolidone carboxylic acid modification is found at glutamine 1. A disordered region spans residues 31–50 (DQPPKADEDPGTPKPVSFTV). 2 disulfide bridges follow: cysteine 55–cysteine 66 and cysteine 73–cysteine 90.

Belongs to the cathelicidin family.

It is found in the secreted. In terms of biological role, probably a microbicidal peptide. This chain is Cathelin, found in Sus scrofa (Pig).